The primary structure comprises 349 residues: Small ribosomal subunit biogenesis GTPase RsgA (349 aa).

The segment at 1-38 (MSKNKLSKGQERRVQANHQRRLKRTDNKPELDDSQLGE) is disordered. The 171-residue stretch at 102–272 (TSVLNRPDIY…VIDSPGVREF (171 aa)) folds into the CP-type G domain. Residues 158–161 (NKID) and 212–220 (GQSGVGKSS) each bind GTP. The Zn(2+) site is built by Cys296, Cys301, His303, and Cys309.

This sequence belongs to the TRAFAC class YlqF/YawG GTPase family. RsgA subfamily. Monomer. Associates with 30S ribosomal subunit, binds 16S rRNA. The cofactor is Zn(2+).

It is found in the cytoplasm. In terms of biological role, one of several proteins that assist in the late maturation steps of the functional core of the 30S ribosomal subunit. Helps release RbfA from mature subunits. May play a role in the assembly of ribosomal proteins into the subunit. Circularly permuted GTPase that catalyzes slow GTP hydrolysis, GTPase activity is stimulated by the 30S ribosomal subunit. This chain is Small ribosomal subunit biogenesis GTPase RsgA, found in Serratia proteamaculans (strain 568).